A 180-amino-acid polypeptide reads, in one-letter code: Large ribosomal subunit protein uL5 (180 aa).

It belongs to the universal ribosomal protein uL5 family. As to quaternary structure, part of the 50S ribosomal subunit; part of the 5S rRNA/L5/L18/L25 subcomplex. Contacts the 5S rRNA and the P site tRNA. Forms a bridge to the 30S subunit in the 70S ribosome.

In terms of biological role, this is one of the proteins that bind and probably mediate the attachment of the 5S RNA into the large ribosomal subunit, where it forms part of the central protuberance. In the 70S ribosome it contacts protein S13 of the 30S subunit (bridge B1b), connecting the 2 subunits; this bridge is implicated in subunit movement. Contacts the P site tRNA; the 5S rRNA and some of its associated proteins might help stabilize positioning of ribosome-bound tRNAs. This Rippkaea orientalis (strain PCC 8801 / RF-1) (Cyanothece sp. (strain PCC 8801)) protein is Large ribosomal subunit protein uL5.